The following is a 99-amino-acid chain: Aspartyl/glutamyl-tRNA(Asn/Gln) amidotransferase subunit C (99 aa).

It belongs to the GatC family. In terms of assembly, heterotrimer of A, B and C subunits.

It carries out the reaction L-glutamyl-tRNA(Gln) + L-glutamine + ATP + H2O = L-glutaminyl-tRNA(Gln) + L-glutamate + ADP + phosphate + H(+). The enzyme catalyses L-aspartyl-tRNA(Asn) + L-glutamine + ATP + H2O = L-asparaginyl-tRNA(Asn) + L-glutamate + ADP + phosphate + 2 H(+). Functionally, allows the formation of correctly charged Asn-tRNA(Asn) or Gln-tRNA(Gln) through the transamidation of misacylated Asp-tRNA(Asn) or Glu-tRNA(Gln) in organisms which lack either or both of asparaginyl-tRNA or glutaminyl-tRNA synthetases. The reaction takes place in the presence of glutamine and ATP through an activated phospho-Asp-tRNA(Asn) or phospho-Glu-tRNA(Gln). The protein is Aspartyl/glutamyl-tRNA(Asn/Gln) amidotransferase subunit C of Corynebacterium diphtheriae (strain ATCC 700971 / NCTC 13129 / Biotype gravis).